Consider the following 127-residue polypeptide: Large ribosomal subunit protein bL20 (127 aa).

Belongs to the bacterial ribosomal protein bL20 family.

In terms of biological role, binds directly to 23S ribosomal RNA and is necessary for the in vitro assembly process of the 50S ribosomal subunit. It is not involved in the protein synthesizing functions of that subunit. The chain is Large ribosomal subunit protein bL20 from Corynebacterium diphtheriae (strain ATCC 700971 / NCTC 13129 / Biotype gravis).